Consider the following 194-residue polypeptide: 7-methyl-GTP pyrophosphatase (194 aa).

Aspartate 67 acts as the Proton acceptor in catalysis.

The protein belongs to the Maf family. YceF subfamily. Requires a divalent metal cation as cofactor.

Its subcellular location is the cytoplasm. The enzyme catalyses N(7)-methyl-GTP + H2O = N(7)-methyl-GMP + diphosphate + H(+). Its function is as follows. Nucleoside triphosphate pyrophosphatase that hydrolyzes 7-methyl-GTP (m(7)GTP). May have a dual role in cell division arrest and in preventing the incorporation of modified nucleotides into cellular nucleic acids. The polypeptide is 7-methyl-GTP pyrophosphatase (Pseudoalteromonas atlantica (strain T6c / ATCC BAA-1087)).